The sequence spans 29 residues: Frontoxin VI (29 aa).

A disulfide bridge connects residues Cys3 and Cys24.

Expressed by the venom gland.

It localises to the secreted. In terms of biological role, binds to muscle nicotinic acetylcholine receptor (nAChR) and inhibit acetylcholine from binding to the receptor, thereby impairing neuromuscular transmission. The chain is Frontoxin VI from Micrurus frontalis (Coral snake).